Consider the following 215-residue polypeptide: Protein-L-isoaspartate O-methyltransferase (215 aa).

Ser-62 is a catalytic residue.

It belongs to the methyltransferase superfamily. L-isoaspartyl/D-aspartyl protein methyltransferase family.

The protein resides in the cytoplasm. The enzyme catalyses [protein]-L-isoaspartate + S-adenosyl-L-methionine = [protein]-L-isoaspartate alpha-methyl ester + S-adenosyl-L-homocysteine. In terms of biological role, catalyzes the methyl esterification of L-isoaspartyl residues in peptides and proteins that result from spontaneous decomposition of normal L-aspartyl and L-asparaginyl residues. It plays a role in the repair and/or degradation of damaged proteins. In Ruegeria sp. (strain TM1040) (Silicibacter sp.), this protein is Protein-L-isoaspartate O-methyltransferase.